The primary structure comprises 42 residues: Photosystem I reaction center subunit IX (42 aa).

Residues 7-27 form a helical membrane-spanning segment; that stretch reads FLSLGPVLLVLWLSVQATLLI.

This sequence belongs to the PsaJ family.

It is found in the cellular thylakoid membrane. In terms of biological role, may help in the organization of the PsaE and PsaF subunits. This is Photosystem I reaction center subunit IX from Gloeothece citriformis (strain PCC 7424) (Cyanothece sp. (strain PCC 7424)).